Here is a 151-residue protein sequence, read N- to C-terminus: UPF0208 membrane protein SG1605 (151 aa).

2 consecutive transmembrane segments (helical) span residues 46-64 (FGVR…WQIA) and 70-90 (GPAV…LWWL).

This sequence belongs to the UPF0208 family.

It is found in the cell inner membrane. The protein is UPF0208 membrane protein SG1605 of Sodalis glossinidius (strain morsitans).